Here is a 337-residue protein sequence, read N- to C-terminus: Inositol 2-dehydrogenase (337 aa).

Belongs to the Gfo/Idh/MocA family. In terms of assembly, homotetramer.

It catalyses the reaction myo-inositol + NAD(+) = scyllo-inosose + NADH + H(+). In terms of biological role, involved in the oxidation of myo-inositol (MI) to 2-keto-myo-inositol (2KMI or 2-inosose). In Burkholderia lata (strain ATCC 17760 / DSM 23089 / LMG 22485 / NCIMB 9086 / R18194 / 383), this protein is Inositol 2-dehydrogenase.